The following is a 332-amino-acid chain: Zinc finger protein CONSTANS-LIKE 13 (332 aa).

Cysteine 13, cysteine 16, cysteine 36, histidine 41, cysteine 56, cysteine 59, cysteine 79, and histidine 84 together coordinate Zn(2+). The B box-type 1; atypical zinc finger occupies cysteine 13–leucine 55. A B box-type 2; atypical zinc finger spans residues cysteine 56–phenylalanine 96. Positions arginine 287–alanine 329 constitute a CCT domain.

The protein belongs to the CONSTANS family.

It is found in the nucleus. In Arabidopsis thaliana (Mouse-ear cress), this protein is Zinc finger protein CONSTANS-LIKE 13 (COL13).